The primary structure comprises 220 residues: Adenylate kinase (220 aa).

An ATP-binding site is contributed by 10-15 (GAGKGT). The interval 30-59 (STGDMLRAAVKAGSPLGVEAKGYMDAGKLV) is NMP. Residues T31, R36, 57-59 (KLV), 85-88 (GFPR), and Q92 contribute to the AMP site. Residues 122 to 150 (GRRTHPASGRTYHVKFNPPKVEGKDDVTG) are disordered. An LID region spans residues 122–159 (GRRTHPASGRTYHVKFNPPKVEGKDDVTGEPLIQRDDD). ATP contacts are provided by residues R123 and 132–133 (TY). AMP contacts are provided by R156 and R167. G206 is an ATP binding site.

The protein belongs to the adenylate kinase family. Monomer.

The protein resides in the cytoplasm. The enzyme catalyses AMP + ATP = 2 ADP. The protein operates within purine metabolism; AMP biosynthesis via salvage pathway; AMP from ADP: step 1/1. In terms of biological role, catalyzes the reversible transfer of the terminal phosphate group between ATP and AMP. Plays an important role in cellular energy homeostasis and in adenine nucleotide metabolism. In Burkholderia ambifaria (strain MC40-6), this protein is Adenylate kinase.